The following is a 272-amino-acid chain: Putative hydro-lyase AZC_4080 (272 aa).

Belongs to the D-glutamate cyclase family.

This is Putative hydro-lyase AZC_4080 from Azorhizobium caulinodans (strain ATCC 43989 / DSM 5975 / JCM 20966 / LMG 6465 / NBRC 14845 / NCIMB 13405 / ORS 571).